We begin with the raw amino-acid sequence, 337 residues long: Geranylgeranyl pyrophosphate synthase subD (337 aa).

Isopentenyl diphosphate-binding residues include lysine 53, arginine 56, and histidine 85. Aspartate 92 and aspartate 96 together coordinate Mg(2+). Arginine 101 lines the dimethylallyl diphosphate pocket. Residue arginine 102 participates in isopentenyl diphosphate binding. Dimethylallyl diphosphate-binding residues include lysine 179, threonine 180, and glutamine 219. Aspartate 222 provides a ligand contact to Mg(2+). Residues asparagine 226, lysine 236, and lysine 246 each coordinate dimethylallyl diphosphate.

Belongs to the FPP/GGPP synthase family. Mg(2+) is required as a cofactor.

The enzyme catalyses isopentenyl diphosphate + dimethylallyl diphosphate = (2E)-geranyl diphosphate + diphosphate. It carries out the reaction isopentenyl diphosphate + (2E)-geranyl diphosphate = (2E,6E)-farnesyl diphosphate + diphosphate. The catalysed reaction is isopentenyl diphosphate + (2E,6E)-farnesyl diphosphate = (2E,6E,10E)-geranylgeranyl diphosphate + diphosphate. It functions in the pathway secondary metabolite biosynthesis; terpenoid biosynthesis. Functionally, geranylgeranyl pyrophosphate synthase; part of the gene cluster that mediates the biosynthesis of the immunosuppressants subglutinols, meroterpenoids consisting of an alpha-pyrone (4-hydroxy-5,6-dimethyl-2-pyrone) moiety attached to a decalin core fused to a five-membered cyclic ether carrying a prenylside chain. The first step of the pathway is the synthesis of the alpha-pyrone moiety by the polyketide synthase subA via condensation of one acetyl-CoA starter unit with 3 malonyl-CoA units and 2 methylations. The alpha-pyrone is then combined with geranylgeranyl pyrophosphate (GGPP) formed by the GGPP synthase subD through the action of the prenyltransferase subC to yield a linear alpha-pyrone diterpenoid. Subsequent steps in the subglutinol biosynthetic pathway involve the decalin core formation, which is thought to be initiated by the epoxidation of the C10-C11 olefin by the FAD-dependent oxidoreductase subE. The following cyclization cascade would be catalyzed by the terpene cyclase subB. Lastly, the FAD-dependent dehydrogenase subF probably catalyzes the five-membered cyclic ether formation to complete the formation of subglutinol A. Subsequent redox reactions appear to give rise to subglutinol C and D, however, it remains unclear which enzymes are responsible for these transformations. SubD may have secondary function in the conversion of the identified subglutinols to subglutinol analog 45, which seems to be the major product of the cluster. In Metarhizium robertsii (strain ARSEF 23 / ATCC MYA-3075) (Metarhizium anisopliae (strain ARSEF 23)), this protein is Geranylgeranyl pyrophosphate synthase subD.